Here is a 281-residue protein sequence, read N- to C-terminus: NADPH-dependent 7-cyano-7-deazaguanine reductase (281 aa).

Residue 87–89 (IES) participates in substrate binding. NADPH is bound at residue 89-90 (SK). C188 (thioimide intermediate) is an active-site residue. Residue D195 is the Proton donor of the active site. Residue 227 to 228 (HE) coordinates substrate. 256-257 (RG) contacts NADPH. The interval 261 to 281 (INPYRSTEQDKPAHNNRMARQ) is disordered.

This sequence belongs to the GTP cyclohydrolase I family. QueF type 2 subfamily. As to quaternary structure, homodimer.

It localises to the cytoplasm. It catalyses the reaction 7-aminomethyl-7-carbaguanine + 2 NADP(+) = 7-cyano-7-deazaguanine + 2 NADPH + 3 H(+). It participates in tRNA modification; tRNA-queuosine biosynthesis. Catalyzes the NADPH-dependent reduction of 7-cyano-7-deazaguanine (preQ0) to 7-aminomethyl-7-deazaguanine (preQ1). The polypeptide is NADPH-dependent 7-cyano-7-deazaguanine reductase (Vibrio campbellii (strain ATCC BAA-1116)).